We begin with the raw amino-acid sequence, 586 residues long: Monoterpene synthase TPS4, chloroplastic (586 aa).

The transit peptide at 1–47 (MAATRNLSLLAQSSQPWAGIYGSHGSPRPISSWLRRQSIAKTSYICM) directs the protein to the chloroplast. Residues D340, D344, D485, T489, and E493 each coordinate Mg(2+). Residues 340–344 (DDIFD) carry the DDXXD motif motif.

The protein belongs to the terpene synthase family. Tpsg subfamily. As to quaternary structure, monomer. It depends on Mg(2+) as a cofactor.

Its subcellular location is the plastid. The protein localises to the chloroplast. The catalysed reaction is (2E)-geranyl diphosphate + H2O = (2E)-geraniol + diphosphate. The protein operates within secondary metabolite biosynthesis; terpenoid biosynthesis. In terms of biological role, monoterpene synthase involved in the biosynthesis of volatile organic compounds. Mediates the conversion of (2E)-geranyl diphosphate (GPP) into the acyclic monoterpene, geraniol. Does not use (2E,6E)-farnesyl diphosphate (FPP) as substrate. The chain is Monoterpene synthase TPS4, chloroplastic from Cananga odorata (Ylang-ylang tree).